The chain runs to 1838 residues: Collagen alpha-1(V) chain (1838 aa).

Residues 1–37 form the signal peptide; it reads MDVHTRWKARSALRPGAPLLPPLLLLLLWAPPPSRAA. The 173-residue stretch at 72–244 folds into the Laminin G-like domain; sequence DVAYRVTKDA…DYCEHYSPDC (173 aa). The interval 231–443 is nonhelical region; sequence RAAYDYCEHY…MPANQDTIYE (213 aa). A sulfotyrosine mark is found at Tyr234, Tyr236, Tyr240, Tyr262, and Tyr263. 5 disordered regions span residues 242 to 269, 281 to 457, 470 to 520, 526 to 545, and 559 to 1574; these read PDCD…GDGE, EDPE…QKGE, PPGP…GTML, FGGG…QESQ, and GPAG…EVIQ. The span at 258-269 shows a compositional bias: acidic residues; that stretch reads NPDEYYTEGDGE. Residues 285–304 are compositionally biased toward basic and acidic residues; sequence DLGKEPTPSKKPVEAAKETT. Residues 309-323 are compositionally biased toward low complexity; that stretch reads ELTPTPTEAAPMPET. Residues Tyr338, Tyr340, Tyr346, and Tyr347 each carry the sulfotyrosine modification. The segment covering 377 to 388 has biased composition (polar residues); it reads PTSTADTSNSSN. A compositionally biased stretch (acidic residues) spans 396–406; that stretch reads GADDLEGEFTE. Sulfotyrosine occurs at positions 416, 417, 420, and 421. Residues 417–428 are compositionally biased toward low complexity; that stretch reads YDPYYDPTSSPS. The interrupted collagenous region stretch occupies residues 444-558; the sequence is GIGGPRGEKG…ILQQARLALR (115 aa). A compositionally biased stretch (pro residues) spans 470-485; it reads PPGPEGPAGLPGPPGT. The span at 506–520 shows a compositional bias: low complexity; it reads LPGADGLPGPPGTML. Residues 559–1570 are triple-helical region; it reads GPAGPMGLTG…GPPGPPGPPG (1012 aa). Hydroxyproline occurs at positions 570 and 576. The segment covering 587 to 597 has biased composition (low complexity); sequence DVGPQGPRGVQ. Pro621 is modified (hydroxyproline). Lys627 bears the 5-hydroxylysine mark. Pro639 bears the Hydroxyproline mark. Lys642 is subject to 5-hydroxylysine. Hydroxyproline is present on residues Pro648, Pro654, Pro657, Pro675, and Pro678. Residues 671-686 show a composition bias toward low complexity; sequence PRGLPGEPGPRGLLGP. The residue at position 687 (Lys687) is a 5-hydroxylysine. The span at 687 to 696 shows a compositional bias: pro residues; that stretch reads KGPPGPPGPP. Hydroxyproline occurs at positions 690, 696, and 705. Lys708 is subject to 5-hydroxylysine. Pro717, Pro720, Pro726, and Pro732 each carry hydroxyproline. Residues 722-741 show a composition bias toward low complexity; it reads QQGNPGAQGLPGPQGAIGPP. Lys744 bears the 5-hydroxylysine mark. Residues 747–756 show a composition bias toward low complexity; that stretch reads LGKPGLPGMP. Hydroxyproline occurs at positions 750, 756, 762, 765, and 771. The residue at position 774 (Lys774) is a 5-hydroxylysine. Hydroxyproline occurs at positions 780 and 789. Lys795, Lys804, Lys807, and Lys810 each carry 5-hydroxylysine. Position 816 is a hydroxyproline (Pro816). Lys819 carries the post-translational modification 5-hydroxylysine. Residue Pro834 is modified to Hydroxyproline. Residues 837–846 are compositionally biased toward basic and acidic residues; sequence RGEDGPEGPK. 5-hydroxylysine is present on Lys846. Pro861 is modified (hydroxyproline). Position 864 is a 5-hydroxylysine (Lys864). The span at 867 to 876 shows a compositional bias: low complexity; sequence LGVPGLPGYP. Hydroxyproline is present on residues Pro870, Pro873, and Pro876. 5-hydroxylysine is present on Lys882. A hydroxyproline mark is found at Pro888 and Pro891. Lys897 is modified (5-hydroxylysine). 2 positions are modified to hydroxyproline: Pro903 and Pro906. Positions 908-917 are enriched in low complexity; it reads PRGQRGPTGP. 2 positions are modified to hydroxyproline: Pro930 and Pro945. Low complexity-rich tracts occupy residues 971 to 990 and 999 to 1011; these read KDGL…QGKT and VGPQ…TGPM. Hydroxyproline occurs at positions 1017, 1020, 1023, and 1029. A compositionally biased stretch (low complexity) spans 1088–1104; that stretch reads SPGERGPAGAAGPIGIP. Residues 1106–1115 show a composition bias toward pro residues; sequence RPGPQGPPGP. Low complexity predominate over residues 1116–1140; the sequence is AGEKGAPGEKGPQGPAGRDGLQGPV. Residues Pro1221 and Pro1224 each carry the hydroxyproline modification. The segment covering 1259–1268 has biased composition (low complexity); it reads PSGAPGADGP. 2 stretches are compositionally biased toward pro residues: residues 1380 to 1398 and 1454 to 1469; these read TGEP…PGPA and SPGP…PPGL. Hydroxyproline is present on residues Pro1467 and Pro1470. Residues 1485–1494 show a composition bias toward low complexity; sequence PGLIGLIGPP. Over residues 1526 to 1541 the composition is skewed to pro residues; it reads PIGPPGPPGLPGPPGP. The span at 1542 to 1554 shows a compositional bias: low complexity; the sequence is KGAKGSSGPTGPK. A compositionally biased stretch (pro residues) spans 1560-1569; that stretch reads PGPPGPPGPP. Positions 1571-1605 are nonhelical region; that stretch reads EVIQPLPIQASRTRRNIDASQLLDDGNGENYVDYA. Sulfotyrosine is present on residues Tyr1601 and Tyr1604. A propeptide spans 1606-1838 (C-terminal propeptide); sequence DGMEEIFGSL…FEVGPACFMG (233 aa). The 229-residue stretch at 1609-1837 folds into the Fibrillar collagen NC1 domain; the sequence is EEIFGSLNSL…GFEVGPACFM (229 aa). Cystine bridges form between Cys1639–Cys1671, Cys1680–Cys1835, and Cys1746–Cys1789. Residues Asp1657, Asn1659, Gln1660, Cys1662, and Asp1665 each coordinate Ca(2+).

The protein belongs to the fibrillar collagen family. Trimers of two alpha 1(V) and one alpha 2(V) chains in most tissues and trimers of one alpha 1(V), one alpha 2(V), and one alpha 3(V) chains in placenta. Interacts with CSPG4. Post-translationally, prolines at the third position of the tripeptide repeating unit (G-X-Y) are hydroxylated in some or all of the chains. In terms of processing, sulfated on 40% of tyrosines.

It is found in the secreted. The protein localises to the extracellular space. Its subcellular location is the extracellular matrix. Functionally, type V collagen is a member of group I collagen (fibrillar forming collagen). It is a minor connective tissue component of nearly ubiquitous distribution. Type V collagen binds to DNA, heparan sulfate, thrombospondin, heparin, and insulin. In Homo sapiens (Human), this protein is Collagen alpha-1(V) chain (COL5A1).